A 109-amino-acid polypeptide reads, in one-letter code: NADH-quinone oxidoreductase subunit K (109 aa).

Transmembrane regions (helical) follow at residues 12–32, 40–60, and 72–92; these read LNHY…GLFM, ILMS…AFSV, and IIIL…LLIY.

The protein belongs to the complex I subunit 4L family. In terms of assembly, NDH-1 is composed of 14 different subunits. Subunits NuoA, H, J, K, L, M, N constitute the membrane sector of the complex.

The protein localises to the cell inner membrane. The catalysed reaction is a quinone + NADH + 5 H(+)(in) = a quinol + NAD(+) + 4 H(+)(out). Its function is as follows. NDH-1 shuttles electrons from NADH, via FMN and iron-sulfur (Fe-S) centers, to quinones in the respiratory chain. The immediate electron acceptor for the enzyme in this species is believed to be ubiquinone. Couples the redox reaction to proton translocation (for every two electrons transferred, four hydrogen ions are translocated across the cytoplasmic membrane), and thus conserves the redox energy in a proton gradient. The protein is NADH-quinone oxidoreductase subunit K of Rickettsia bellii (strain RML369-C).